A 467-amino-acid polypeptide reads, in one-letter code: Uronate isomerase (467 aa).

This sequence belongs to the metallo-dependent hydrolases superfamily. Uronate isomerase family.

It carries out the reaction D-glucuronate = D-fructuronate. The catalysed reaction is aldehydo-D-galacturonate = keto-D-tagaturonate. It participates in carbohydrate metabolism; pentose and glucuronate interconversion. In Clostridium acetobutylicum (strain ATCC 824 / DSM 792 / JCM 1419 / IAM 19013 / LMG 5710 / NBRC 13948 / NRRL B-527 / VKM B-1787 / 2291 / W), this protein is Uronate isomerase.